Consider the following 237-residue polypeptide: Pyrimidine 5'-nucleotidase PynA (237 aa).

Catalysis depends on Asp9, which acts as the Nucleophile. The Mg(2+) site is built by Asp9, Asp11, and Asp181. Asp11 serves as the catalytic Proton donor.

It belongs to the HAD-like hydrolase superfamily. YjjG family. Homodimer. Requires Mg(2+) as cofactor. The cofactor is Mn(2+).

The protein resides in the cytoplasm. The catalysed reaction is a ribonucleoside 5'-phosphate + H2O = a ribonucleoside + phosphate. In terms of biological role, nucleotidase that shows high phosphatase activity toward non-canonical pyrimidine nucleotides and three canonical nucleoside 5'-monophosphates (UMP, dUMP and dTMP), and no activity against IMP, UDP, GMP, AMP, UTP or pNPP. Appears to function as a house-cleaning nucleotidase in vivo, since the general nucleotidase activity of it allows it to protect cells against non-canonical pyrimidine derivatives such as 5-fluoro-2'-deoxyuridine monophosphate (5-FdUMP), and prevents the incorporation of potentially mutagenic nucleotides such as 5-bromo-2'-deoxyuridine (5-BrdU) into DNA. Is strictly specific to pyrimidine substrates with 5'-monophosphates and shows no activity against nucleoside di- and triphosphates. The polypeptide is Pyrimidine 5'-nucleotidase PynA (Streptococcus pneumoniae (strain ATCC BAA-255 / R6)).